Consider the following 136-residue polypeptide: ATP synthase epsilon chain (136 aa).

The protein belongs to the ATPase epsilon chain family. F-type ATPases have 2 components, CF(1) - the catalytic core - and CF(0) - the membrane proton channel. CF(1) has five subunits: alpha(3), beta(3), gamma(1), delta(1), epsilon(1). CF(0) has three main subunits: a, b and c.

The protein resides in the cell inner membrane. Its function is as follows. Produces ATP from ADP in the presence of a proton gradient across the membrane. This is ATP synthase epsilon chain from Hydrogenobaculum sp. (strain Y04AAS1).